The sequence spans 477 residues: Bifunctional protein HldE (477 aa).

The ribokinase stretch occupies residues 1–318 (MKLSMPRFDQ…RAIQREEGSE (318 aa)). 194-197 (NLSE) serves as a coordination point for ATP. The active site involves Asp-263. The tract at residues 343–477 (FTNGCFDILH…EKIRKTDKAE (135 aa)) is cytidylyltransferase.

This sequence in the N-terminal section; belongs to the carbohydrate kinase PfkB family. In the C-terminal section; belongs to the cytidylyltransferase family. Homodimer.

The catalysed reaction is D-glycero-beta-D-manno-heptose 7-phosphate + ATP = D-glycero-beta-D-manno-heptose 1,7-bisphosphate + ADP + H(+). It carries out the reaction D-glycero-beta-D-manno-heptose 1-phosphate + ATP + H(+) = ADP-D-glycero-beta-D-manno-heptose + diphosphate. The protein operates within nucleotide-sugar biosynthesis; ADP-L-glycero-beta-D-manno-heptose biosynthesis; ADP-L-glycero-beta-D-manno-heptose from D-glycero-beta-D-manno-heptose 7-phosphate: step 1/4. It functions in the pathway nucleotide-sugar biosynthesis; ADP-L-glycero-beta-D-manno-heptose biosynthesis; ADP-L-glycero-beta-D-manno-heptose from D-glycero-beta-D-manno-heptose 7-phosphate: step 3/4. Functionally, catalyzes the phosphorylation of D-glycero-D-manno-heptose 7-phosphate at the C-1 position to selectively form D-glycero-beta-D-manno-heptose-1,7-bisphosphate. In terms of biological role, catalyzes the ADP transfer from ATP to D-glycero-beta-D-manno-heptose 1-phosphate, yielding ADP-D-glycero-beta-D-manno-heptose. The polypeptide is Bifunctional protein HldE (Pseudomonas fluorescens (strain ATCC BAA-477 / NRRL B-23932 / Pf-5)).